The following is a 95-amino-acid chain: Aspartyl/glutamyl-tRNA(Asn/Gln) amidotransferase subunit C (95 aa).

It belongs to the GatC family. In terms of assembly, heterotrimer of A, B and C subunits.

The catalysed reaction is L-glutamyl-tRNA(Gln) + L-glutamine + ATP + H2O = L-glutaminyl-tRNA(Gln) + L-glutamate + ADP + phosphate + H(+). It carries out the reaction L-aspartyl-tRNA(Asn) + L-glutamine + ATP + H2O = L-asparaginyl-tRNA(Asn) + L-glutamate + ADP + phosphate + 2 H(+). Allows the formation of correctly charged Asn-tRNA(Asn) or Gln-tRNA(Gln) through the transamidation of misacylated Asp-tRNA(Asn) or Glu-tRNA(Gln) in organisms which lack either or both of asparaginyl-tRNA or glutaminyl-tRNA synthetases. The reaction takes place in the presence of glutamine and ATP through an activated phospho-Asp-tRNA(Asn) or phospho-Glu-tRNA(Gln). This is Aspartyl/glutamyl-tRNA(Asn/Gln) amidotransferase subunit C from Ruegeria sp. (strain TM1040) (Silicibacter sp.).